Consider the following 363-residue polypeptide: Probable endopolygalacturonase A (363 aa).

An N-terminal signal peptide occupies residues 1 to 20 (MQLLQSSVIAATVGAALVAA). Residues 21 to 28 (APVELEAR) constitute a propeptide that is removed on maturation. Cysteine 31 and cysteine 46 form a disulfide bridge. PbH1 repeat units lie at residues 158–187 (SDNL…DIGS), 188–209 (STYI…AINS), 210–230 (GSHI…SIGS), 239–260 (VEDV…RIKT), 268–290 (VSNV…VVEQ), and 302–347 (TNGI…SITG). A glycan (N-linked (GlcNAc...) asparagine) is linked at asparagine 162. Aspartate 202 (proton donor) is an active-site residue. A disulfide bridge links cysteine 204 with cysteine 220. Histidine 224 is a catalytic residue. 2 disulfides stabilise this stretch: cysteine 330–cysteine 335 and cysteine 354–cysteine 363.

It belongs to the glycosyl hydrolase 28 family.

It localises to the secreted. The enzyme catalyses (1,4-alpha-D-galacturonosyl)n+m + H2O = (1,4-alpha-D-galacturonosyl)n + (1,4-alpha-D-galacturonosyl)m.. Functionally, involved in maceration and soft-rotting of plant tissue. Hydrolyzes the 1,4-alpha glycosidic bonds of de-esterified pectate in the smooth region of the plant cell wall. This chain is Probable endopolygalacturonase A (pgaA), found in Aspergillus parasiticus.